The sequence spans 301 residues: ATP synthase gamma chain (301 aa).

Belongs to the ATPase gamma chain family. F-type ATPases have 2 components, CF(1) - the catalytic core - and CF(0) - the membrane proton channel. CF(1) has five subunits: alpha(3), beta(3), gamma(1), delta(1), epsilon(1). CF(0) has three main subunits: a, b and c.

It localises to the cell inner membrane. Functionally, produces ATP from ADP in the presence of a proton gradient across the membrane. The gamma chain is believed to be important in regulating ATPase activity and the flow of protons through the CF(0) complex. The chain is ATP synthase gamma chain from Helicobacter pylori (strain Shi470).